We begin with the raw amino-acid sequence, 2049 residues long: Non-reducing polyketide synthase hmp3 (2049 aa).

The N-terminal acylcarrier protein transacylase (SAT) domain stretch occupies residues 9 to 246 (LYFGDQTDSW…NELSIHALQH (238 aa)). One can recognise a Ketosynthase family 3 (KS3) domain in the interval 365–793 (PGRIAIVGMA…GGNASLILED (429 aa)). Active-site for beta-ketoacyl synthase activity residues include cysteine 538, histidine 673, and histidine 712. The segment at 887-1146 (VFVFTGQGSH…VDFVGALGAL (260 aa)) is malonyl-CoA:ACP transacylase (MAT) domain. Serine 978 serves as the catalytic For acyl/malonyl transferase activity. The tract at residues 1265 to 1404 (QQIVEESSSP…AQTLQTSWNR (140 aa)) is N-terminal hotdog fold. The PKS/mFAS DH domain maps to 1265–1573 (QQIVEESSSP…FHEVSNNVLD (309 aa)). Residues 1269–1572 (EESSSPSLHV…SFHEVSNNVL (304 aa)) are product template (PT) domain. The tract at residues 1425–1573 (GHRMLPSILY…FHEVSNNVLD (149 aa)) is C-terminal hotdog fold. The Carrier domain occupies 1626–1704 (SSESELFHTI…DLRNEFARSS (79 aa)). Serine 1663 is modified (O-(pantetheine 4'-phosphoryl)serine). Positions 1700-1747 (FARSSTSTPPSKTFSEFSIVDATPESTRSSSRAPSEKKEPAPASEKSE) are disordered. The segment covering 1703–1717 (SSTSTPPSKTFSEFS) has biased composition (low complexity). Positions 1723-1732 (PESTRSSSRA) are enriched in polar residues. Over residues 1733–1747 (PSEKKEPAPASEKSE) the composition is skewed to basic and acidic residues. Positions 1761–1951 (SPLPSARITL…KRTAIIWAKK (191 aa)) are thioesterase (TE) domain.

It functions in the pathway secondary metabolite biosynthesis. Functionally, non-reducing polyketide synthase; part of the gene cluster that mediates the biosynthesis of hypothemycin, a resorcylic acid lactone (RAL) that irreversibly inhibits a subset of protein kinases with a conserved cysteine in the ATP binding site such as human ERK2. The first step is performed by both PKSs hmp3 and hmp8 and leads to the production of 7',8'-dehydrozearalenol (DHZ). The highly reducing PKS hpm8 synthesizes the reduced hexaketide (7S,11S,2E,8E)-7,11-dihydroxy-dodeca-2,8-dienoate, which is transferred downstream to the non-reducing PKS hpm3. Hpm3 then extends the reduced hexaketide to a nonaketide, after which regioselective cyclization and macrolactonization affords DHZ. The next step is the conversion of DHZ into aigialomycin C and is performed by the O-methyltransferase hmp5, the FAD-binding monooxygenase hmp7, and the cytochrome P450 monooxygenase hmp1. The wide substrate tolerance of the hmp5 and hmp7 implies that the reactions from DHZ to aigialomycin C can occur in any order. The steps from aigialomycin C to hypothemycin are less well established. The FAD-linked oxidoreductase hmp9 presumably catalyzes oxidation of the C-6' hydroxyl to a ketone. The timing of this oxidation is important, since the resulting enone functional group is a Michael acceptor that can react spontaneously with glutathione, an abundant metabolite in fungal cells. The glutathione S-transferase hmp2 catalyzes cis-trans isomerization of the 7',8' double bond with equilibrium favoring the trans isomer. The hpm6-encoded transporter might preferentially pump hypothemycin out of the cell relative to the trans isomer aigialomycin A. The cis-to-trans isomerization may be coupled with C-4' hydroxylation, since all known hypothemycin analogs containing the enone functional group also have hydroxyl groups at both C-4' and C-5'. This Hypomyces subiculosus (Nectria subiculosa) protein is Non-reducing polyketide synthase hmp3.